The sequence spans 489 residues: MLEPVSTAQSLWSFGLWILVILSPVLFFASRELGILNAKKRFAKNGFEEVLAGLRKSDVFGLMTINGPKIVLAPKFAQEIRSNPALSVSAFSSSELHAHIRGFDVFRQGEADDILQDTVRSKITQSIGDLIQPLSEECSLTLKPKWTDSPEWHEVCPHTTILDIIARLSSRAFIGDELCRNPKWLRLTVDFTVDSFRAAEALNWWPYALRPLVARFLPSCLKLHKYIQDADNMMKPVLESRRQAQAKDPQKSYPDTIQWFEETAQGRPYDPVRLQLTLAFASIHTTADLVIQTILDLCSAKNWDELCRSLREEIISSFREEGWRKPLLAKLKIMDSALKESQRLKPVSIVGMGRIAKEAVKLSNNTIIPKGTRLLVSNTAMWDPEIYPDPRTYDPYRFLRLREASENESAGQLVSLSPTHLSFGLGKHACPGRFFAAAEVKIILCHILLKYDIKLADGCKPKPLRAGTNLVADPTAKLLVRRRQEEVAL.

Residues 10-30 (SLWSFGLWILVILSPVLFFAS) form a helical membrane-spanning segment. Asn-364 and Asn-407 each carry an N-linked (GlcNAc...) asparagine glycan. Cys-430 serves as a coordination point for heme.

Belongs to the cytochrome P450 family. It depends on heme as a cofactor.

The protein resides in the membrane. The protein operates within secondary metabolite biosynthesis; terpenoid biosynthesis. Its function is as follows. Cytochrome P450 monooxygenase; part of the gene cluster that mediates the biosynthesis of terretonin, a fungal meroterpenoid that acts as a mycotoxin. The first step of the pathway is the synthesis of 3,5-dimethylorsellinic acid (DMOA) by the polyketide synthase trt4. DMOA is then prenylated into farnesyl-DMOA by the polyprenyl transferase trt2. Methylation by the methyltransferase trt5 then leads to farnesyl-DMOA methyl ester which is further subject to epoxidation by the FAD-dependent monooxygenase trt8 to yield epoxyfarnesyl-DMOA methyl ester. Cyclization of epoxyfarnesyl-DMOA methyl ester by the terpene cyclase trt1 leads to a tetracycle intermediate which is in turn converted to preterretonin. Dehydrogenase trt9 comes next to transform preterretonin to preterrenoid. The FAD-dependent monooxygenase trt3 is then required for the C-hydroxylation at C16 of preterrenoid to yield terrenoid. The cytochrome P450 trt6 catalyzes three successive oxidations to transform terrenoid into an unstable intermediate, which then undergoes the D-ring expansion and unusual rearrangement of the methoxy group to afford the core skeleton of terretonin. Trt14 catalyzes the D-ring expansion of terretonin involving intramolecular methoxy rearrangement as well as the hydrolysis of the expanded D-ring and the methyl ester moiety. Finally, the nonheme iron-dependent dioxygenase trt7 accomplishes the last two oxidation reactions steps to complete the biosynthesis of terretonin. Terretonin C is produced via spontaneous decarboxylation of the terretonin precursor. Another shunt product of the terretonin biosynthesis is dihydrofarnesyl-DMOA, derived from epoxyfarnesyl-DMOA through hydrolysis of the epoxide. This is Cytochrome P450 monooxygenase trt6 from Aspergillus terreus (strain NIH 2624 / FGSC A1156).